Here is a 202-residue protein sequence, read N- to C-terminus: Recoverin (202 aa).

Gly-2 carries the N-myristoyl glycine lipid modification. Residue Cys-39 is modified to Cysteine sulfenic acid (-SOH). 4 EF-hand domains span residues 41–59, 61–96, 97–132, and 147–182; these read SGRI…FFPD, DPKA…TTAG, KPTQ…IFKM, and TPEK…NKEI. 10 residues coordinate Ca(2+): Asp-74, Asn-76, Asp-78, Thr-80, Glu-85, Asp-110, Asp-112, Asn-114, Thr-116, and Glu-121. An interaction with GRK1 region spans residues 189-192; it reads EPQK.

It belongs to the recoverin family. As to quaternary structure, homodimer; disulfide-linked. Homodimerization is caused by prolonged intense illumination. May form a complex composed of RHO, GRK1 and RCVRN in a Ca(2+)-dependent manner; RCVRN prevents the interaction between GRK1 and RHO. Interacts (via C-terminus) with GRK1 (via N-terminus); the interaction is Ca(2+)-dependent. Post-translationally, the N-terminal glycine is linked to one of four different types of acyl groups. The most abundant is myristoleate (14:1), but 14:0, 14:2, and 12:0 acyl residues are also present. The Ca(2+) induced exposure of the myristoyl group, known as the calcium-myristoyl switch, promotes RCVRN binding to the photoreceptor cell membranes only when intracellular Ca(2+) concentration is high. Oxidation on Cys-39 occurs in response to prolonged intense illumination and results in the formation of disulfide homodimers, and to a lesser extent disulfide-linked heterodimers. Expressed in rod photoreceptors in the retina (at protein level).

It localises to the photoreceptor inner segment. Its subcellular location is the cell projection. It is found in the cilium. The protein resides in the photoreceptor outer segment. The protein localises to the photoreceptor outer segment membrane. It localises to the perikaryon. Functionally, acts as a calcium sensor and regulates phototransduction of cone and rod photoreceptor cells. Modulates light sensitivity of cone photoreceptor in dark and dim conditions. In response to high Ca(2+) levels induced by low light levels, prolongs RHO/rhodopsin activation in rod photoreceptor cells by binding to and inhibiting GRK1-mediated phosphorylation of RHO/rhodopsin. Plays a role in scotopic vision/enhances vision in dim light by enhancing signal transfer between rod photoreceptors and rod bipolar cells. Improves rod photoreceptor sensitivity in dim light and mediates response of rod photoreceptors to facilitate detection of change and motion in bright light. This is Recoverin (Rcvrn) from Mus musculus (Mouse).